The chain runs to 1162 residues: Sialidase (1162 aa).

3 BNR repeats span residues 23–34 (KYSVDDGETWET), 163–174 (FYSEDDGKTWKF), and 209–220 (YESSDMEKPWVE). N-linked (GlcNAc...) asparagine glycans are attached at residues Asn-342 and Asn-394. Residues 587–1123 (HMDSSSDSSA…STPSTPAGSS (537 aa)) form a disordered region. Residues 589 to 615 (DSSSDSSAHSTPSTPADSSAHSTPSTP) show a composition bias toward low complexity. Residues 589-1120 (DSSSDSSAHS…SAHSTPSTPA (532 aa)) are 44 X 12 AA tandem repeats, LTR domain. 2 stretches are compositionally biased toward polar residues: residues 616 to 689 (VDSS…TPVD) and 699 to 1123 (PADS…AGSS). Asn-1125 is a glycosylation site (N-linked (GlcNAc...) asparagine).

This sequence belongs to the glycosyl hydrolase 33 family.

The protein localises to the cell membrane. The enzyme catalyses Hydrolysis of alpha-(2-&gt;3)-, alpha-(2-&gt;6)-, alpha-(2-&gt;8)- glycosidic linkages of terminal sialic acid residues in oligosaccharides, glycoproteins, glycolipids, colominic acid and synthetic substrates.. Functionally, developmentally regulated neuraminidase implicated in parasite invasion of cells. In Trypanosoma cruzi, this protein is Sialidase (TCNA).